The chain runs to 256 residues: Follistatin-related protein 3 (256 aa).

Residues 1 to 23 (MRPGALWPLLWGALVWAVGSVGA) form the signal peptide. Residues 34–105 (GVCWLQQGKE…SCDGVECGPG (72 aa)) enclose the TB domain. Disulfide bonds link cysteine 36–cysteine 59, cysteine 46–cysteine 90, cysteine 60–cysteine 93, cysteine 97–cysteine 108, cysteine 102–cysteine 117, cysteine 119–cysteine 151, cysteine 123–cysteine 144, and cysteine 133–cysteine 165. Asparagine 71 carries an N-linked (GlcNAc...) asparagine glycan. The 21-residue stretch at 97–117 (CDGVECGPGKACRMLGGRPHC) folds into the Follistatin-like 1 domain. Kazal-like domains follow at residues 111–167 (LGGR…RCQK) and 187–243 (SAHC…ICTG). The Follistatin-like 2 domain occupies 168-191 (SCAQVVCPRPQSCLVDQTGSAHCV). Disulfide bonds link cysteine 193–cysteine 227, cysteine 198–cysteine 220, and cysteine 209–cysteine 241. A glycan (N-linked (GlcNAc...) asparagine) is linked at asparagine 213.

As to quaternary structure, interacts with INHBA and INHBB. Interacts with FN1. Interacts with ADAM12. Interacts with MLLT10; the interaction enhances MLLT10 in vitro transcriptional activity and self-association. Interacts with MSTN.

Its subcellular location is the secreted. It is found in the nucleus. Its function is as follows. The secreted form is a binding and antagonizing protein for members of the TGF-beta family, such as activin, BMP2 and MSTN. Inhibits activin A-, activin B-, BMP2- and MSDT-induced cellular signaling; more effective on activin A than on activin B. Involved in bone formation; inhibits osteoclast differentiation. Involved in hematopoiesis; involved in differentiation of hemopoietic progenitor cells, increases hematopoietic cell adhesion to fibronectin and seems to contribute to the adhesion of hematopoietic precursor cells to the bone marrow stroma. The nuclear form is probably involved in transcriptional regulation via interaction with MLLT10. This is Follistatin-related protein 3 (Fstl3) from Rattus norvegicus (Rat).